We begin with the raw amino-acid sequence, 537 residues long: CTP synthase (537 aa).

The segment at 1–268 (MPFKCIFLTG…STFITEKLGL (268 aa)) is amidoligase domain. Serine 14 serves as a coordination point for CTP. Residue serine 14 participates in UTP binding. 15-20 (SLGKGL) serves as a coordination point for ATP. Residue tyrosine 55 participates in L-glutamine binding. Residue aspartate 72 participates in ATP binding. Mg(2+)-binding residues include aspartate 72 and glutamate 142. CTP is bound by residues 149–151 (DIE), 188–193 (KTKPTQ), and lysine 224. Residues 188–193 (KTKPTQ) and lysine 224 contribute to the UTP site. The region spanning 294–533 (RIGLVGKYVQ…IQAALLYSKN (240 aa)) is the Glutamine amidotransferase type-1 domain. Glycine 353 lines the L-glutamine pocket. Cysteine 380 serves as the catalytic Nucleophile; for glutamine hydrolysis. L-glutamine-binding positions include 381-384 (LGMQ), glutamate 404, and arginine 461. Catalysis depends on residues histidine 506 and glutamate 508.

This sequence belongs to the CTP synthase family. In terms of assembly, homotetramer.

The catalysed reaction is UTP + L-glutamine + ATP + H2O = CTP + L-glutamate + ADP + phosphate + 2 H(+). It carries out the reaction L-glutamine + H2O = L-glutamate + NH4(+). The enzyme catalyses UTP + NH4(+) + ATP = CTP + ADP + phosphate + 2 H(+). It functions in the pathway pyrimidine metabolism; CTP biosynthesis via de novo pathway; CTP from UDP: step 2/2. Its activity is regulated as follows. Allosterically activated by GTP, when glutamine is the substrate; GTP has no effect on the reaction when ammonia is the substrate. The allosteric effector GTP functions by stabilizing the protein conformation that binds the tetrahedral intermediate(s) formed during glutamine hydrolysis. Inhibited by the product CTP, via allosteric rather than competitive inhibition. In terms of biological role, catalyzes the ATP-dependent amination of UTP to CTP with either L-glutamine or ammonia as the source of nitrogen. Regulates intracellular CTP levels through interactions with the four ribonucleotide triphosphates. This chain is CTP synthase, found in Chlamydia caviae (strain ATCC VR-813 / DSM 19441 / 03DC25 / GPIC) (Chlamydophila caviae).